A 628-amino-acid chain; its full sequence is Alpha-L-arabinofuranosidase A (628 aa).

An N-terminal signal peptide occupies residues 1–25; that stretch reads MVAFSALSGVSALSLLLCLVQHAHG. Residues Asn36, Asn51, Asn74, Asn152, Asn171, Asn260, Asn359, and Asn493 are each glycosylated (N-linked (GlcNAc...) asparagine).

Belongs to the glycosyl hydrolase 51 family.

The protein localises to the secreted. It carries out the reaction Hydrolysis of terminal non-reducing alpha-L-arabinofuranoside residues in alpha-L-arabinosides.. It functions in the pathway glycan metabolism; L-arabinan degradation. In terms of biological role, alpha-L-arabinofuranosidase involved in the degradation of arabinoxylan, a major component of plant hemicellulose. Acts only on small linear 1,5-alpha-linked L-arabinofuranosyl oligosaccharides. The polypeptide is Alpha-L-arabinofuranosidase A (abfA) (Aspergillus kawachii (strain NBRC 4308) (White koji mold)).